A 517-amino-acid polypeptide reads, in one-letter code: Carotenoid phi-ring synthase (517 aa).

The interval 1 to 24 is disordered; sequence MFARDSGRGHRHGRDRQAAVVPAP. Residues Ala45, 64-65, Arg72, Tyr99, Asp461, and Met472 each bind FAD; that span reads ER.

This sequence belongs to the carotenoid/retinoid oxidoreductase family. FAD is required as a cofactor.

The enzyme catalyses a carotenoid beta-end derivative + 2 A = a carotenoid phi-end derivative + 2 AH2. It functions in the pathway carotenoid biosynthesis. Involved in the biosynthesis of isorenieratene, a carotenoid with aromatic end groups. Catalyzes the introduction of two additional double bonds into each ionone ring of beta-carotene to produce isorenieratene. The reaction includes an intramolecular methyl transfer from position C1 to position C2 of the ring. In Streptomyces griseus, this protein is Carotenoid phi-ring synthase.